The sequence spans 477 residues: MKILFVAAEGAPFSKTGGLGDVIGALPKSLVKAGHEVAVILPYYDMVEAKFGNQIEDVLHFEVSVGWRRQYCGIKKTVLNGVTFYFIDNQYYFFRGHVYGDFDDGERFAFFQLAAIEAMERIDFIPDLLHVHDYHTAMIPFLLKEKYRWIQAYEDIETVLTIHNLEFQGQFSEGMLGDLFGVGLERYADGTLRWNNCLNWMKAGILYANRVSTVSPSYAHEIMTSQFGCNLDQILKMESGKVSGIVNGIDADLYNPQTDALLDYHFNQEDLSGKAKNKAKLQERVGLPVRXXXPLVGIVSRLTRQKGFDVVVESLHHILQEDVQIVLLGTGDPAFEGAFSWFAQIYPDKLSTNITFDVKLAQEIYAACDLFLMPSRFEPCGLSQMMAMRYGTLPLVHEVGGLRDTVRAFNPIEGSGTGFSFDNLSPYWLNWTFQTALDLYRNHPDIWRNLQKQAMESDFSWDTACKSYLDLYHSLVN.

An ADP-alpha-D-glucose-binding site is contributed by K15.

The protein belongs to the glycosyltransferase 1 family. Bacterial/plant glycogen synthase subfamily.

The enzyme catalyses [(1-&gt;4)-alpha-D-glucosyl](n) + ADP-alpha-D-glucose = [(1-&gt;4)-alpha-D-glucosyl](n+1) + ADP + H(+). It functions in the pathway glycan biosynthesis; glycogen biosynthesis. Synthesizes alpha-1,4-glucan chains using ADP-glucose. The polypeptide is Glycogen synthase (Streptococcus pneumoniae serotype 19F (strain G54)).